We begin with the raw amino-acid sequence, 706 residues long: Putative pentatricopeptide repeat-containing protein At3g47840 (706 aa).

PPR repeat units lie at residues 39 to 69, 70 to 104, 107 to 141, 142 to 172, 173 to 203, 208 to 242, 243 to 273, 274 to 308, 309 to 343, 344 to 374, 375 to 409, 410 to 444, 445 to 475, 476 to 510, 511 to 541, and 547 to 577; these read VKFD…MPHG, DIVS…DHAV, DTSV…SLLS, SVYV…MPFR, NAVT…MSRS, DTYT…GFVT, TLCV…MSER, DVVS…QVPP, NEQT…GLND, SLSV…MRCR, DIIS…GTKP, TDFA…GLEQ, NSTV…TDRD, DIVS…GFRP, DSVT…MQET, and AKEH…MSWK. The segment at 582-657 is type E motif; that stretch reads VWTTLLIACK…EPGWSSIKIK (76 aa). The tract at residues 658-688 is type E(+) motif; the sequence is DCVSAFVSGDRFHPQSEDIYNILELAVSGAE.

This sequence belongs to the PPR family. PCMP-E subfamily.

The chain is Putative pentatricopeptide repeat-containing protein At3g47840 (PCMP-E43) from Arabidopsis thaliana (Mouse-ear cress).